The chain runs to 137 residues: Phosphomevalonate dehydratase small subunit (137 aa).

Ser65 acts as the Proton acceptor in catalysis.

Belongs to the AcnX type II small subunit family. As to quaternary structure, heterodimer composed of a large subunit (PMDh-L) and a small subunit (PMDh-S).

The enzyme catalyses (R)-5-phosphomevalonate = (2E)-3-methyl-5-phosphooxypent-2-enoate + H2O. It participates in isoprenoid biosynthesis; isopentenyl diphosphate biosynthesis via mevalonate pathway. Functionally, component of a hydro-lyase that catalyzes the dehydration of mevalonate 5-phosphate (MVA5P) to form trans-anhydromevalonate 5-phosphate (tAHMP). Involved in the archaeal mevalonate (MVA) pathway, which provides fundamental precursors for isoprenoid biosynthesis, such as isopentenyl diphosphate (IPP) and dimethylallyl diphosphate (DMAPP). The chain is Phosphomevalonate dehydratase small subunit from Methanococcoides burtonii (strain DSM 6242 / NBRC 107633 / OCM 468 / ACE-M).